We begin with the raw amino-acid sequence, 285 residues long: Golgi to ER traffic protein 2 (285 aa).

The span at Met1 to Arg10 shows a compositional bias: basic and acidic residues. Disordered stretches follow at residues Met1–Ser72 and Met87–Leu106. N-acetylserine is present on Ser2. Residues Ser2–Arg148 lie on the Cytoplasmic side of the membrane. Over residues Arg11 to Lys20 the composition is skewed to basic residues. Over residues Gly24–Asn42 the composition is skewed to polar residues. Position 45 is a phosphoserine (Ser45). Residues Ala49–Ser60 show a composition bias toward low complexity. A compositionally biased stretch (polar residues) spans Gly93 to Asp104. The helical transmembrane segment at Leu149–Ile169 threads the bilayer. The Lumenal portion of the chain corresponds to Thr170 to Asn196. N-linked (GlcNAc...) asparagine glycans are attached at residues Asn173 and Asn196. A helical membrane pass occupies residues Phe197–Leu216. Residues Lys217–Asp263 lie on the Cytoplasmic side of the membrane. Residues Leu264–Tyr284 traverse the membrane as a helical segment. A topological domain (lumenal) is located at residue Leu285.

Belongs to the GET2 family. As to quaternary structure, component of the Golgi to ER traffic (GET) complex, which is composed of GET1, GET2 and GET3. Within the complex, GET1 and GET2 form a heterotetramer which is stabilized by phosphatidylinositol binding and which binds to the GET3 homodimer.

It localises to the endoplasmic reticulum membrane. It is found in the golgi apparatus membrane. Required for the post-translational delivery of tail-anchored (TA) proteins to the endoplasmic reticulum. Together with GET1, acts as a membrane receptor for soluble GET3, which recognizes and selectively binds the transmembrane domain of TA proteins in the cytosol. The GET complex cooperates with the HDEL receptor ERD2 to mediate the ATP-dependent retrieval of resident ER proteins that contain a C-terminal H-D-E-L retention signal from the Golgi to the ER. Involved in DNA replication and DNA damage response and also in cell wall function. This Saccharomyces cerevisiae (strain RM11-1a) (Baker's yeast) protein is Golgi to ER traffic protein 2.